An 818-amino-acid polypeptide reads, in one-letter code: Histone H2A deubiquitinase MYSM1 (818 aa).

The 52-residue stretch at 107 to 158 folds into the SANT domain; sequence SSPVKWTKEEKNLFEQGLATFGRRWTSIARLIGSRSVLQVKNYARHYFKNKC. An SWIRM domain is found at 344–442; that stretch reads IKPPDQELEI…FGCEQAIYNR (99 aa). The MPN domain maps to 548–680; it reads VKVSCEAMLV…PHPQSQVACL (133 aa). Residues H627, H629, and D640 each contribute to the Zn(2+) site. The JAMM motif signature appears at 627 to 640; sequence HSHPAFDPNPSIRD. Positions 745–749 match the LXXLL motif motif; it reads LQKLL.

This sequence belongs to the peptidase M67A family. MYSM1 subfamily.

It localises to the nucleus. In terms of biological role, metalloprotease that specifically deubiquitinates monoubiquitinated histone H2A, a specific tag for epigenetic transcriptional repression, thereby acting as a coactivator. Preferentially deubiquitinates monoubiquitinated H2A in hyperacetylated nucleosomes. Deubiquitination of histone H2A leads to facilitate the phosphorylation and dissociation of histone H1 from the nucleosome. Acts as a coactivator by participating in the initiation and elongation steps of androgen receptor (AR)-induced gene activation. The chain is Histone H2A deubiquitinase MYSM1 (mysm1) from Xenopus laevis (African clawed frog).